Reading from the N-terminus, the 203-residue chain is Signal peptidase I (203 aa).

The segment at 1 to 26 (MSSESDSPTPQTPPAQPAASQPKADS) is disordered. Residues 1-33 (MSSESDSPTPQTPPAQPAASQPKADSPLMEGIK) lie on the Cytoplasmic side of the membrane. Low complexity predominate over residues 17-26 (PAASQPKADS). Residues 34 to 50 (TIGLSVVLALGIRTFVA) form a helical membrane-spanning segment. The Extracellular segment spans residues 51–203 (EARYIPSESM…LGELGPPPSY (153 aa)). Residues Ser59 and Lys109 contribute to the active site.

This sequence belongs to the peptidase S26 family.

It localises to the cell membrane. It carries out the reaction Cleavage of hydrophobic, N-terminal signal or leader sequences from secreted and periplasmic proteins.. The polypeptide is Signal peptidase I (lepB) (Leptolyngbya laminosa (Phormidium laminosum)).